The following is a 124-amino-acid chain: Small ribosomal subunit protein uS13 (124 aa).

Residues 94–124 (GLPLRGQRTKNNSRTRKGRRKTVANKKKATK) are disordered. Residues 100–124 (QRTKNNSRTRKGRRKTVANKKKATK) show a composition bias toward basic residues.

The protein belongs to the universal ribosomal protein uS13 family. Part of the 30S ribosomal subunit. Forms a loose heterodimer with protein S19. Forms two bridges to the 50S subunit in the 70S ribosome.

Located at the top of the head of the 30S subunit, it contacts several helices of the 16S rRNA. In the 70S ribosome it contacts the 23S rRNA (bridge B1a) and protein L5 of the 50S subunit (bridge B1b), connecting the 2 subunits; these bridges are implicated in subunit movement. Contacts the tRNAs in the A and P-sites. This Christiangramia forsetii (strain DSM 17595 / CGMCC 1.15422 / KT0803) (Gramella forsetii) protein is Small ribosomal subunit protein uS13.